Here is a 338-residue protein sequence, read N- to C-terminus: UbiA prenyltransferase domain-containing protein 1 (338 aa).

At A2 the chain carries N-acetylalanine. The next 8 helical transmembrane spans lie at 83 to 103 (LLVGCAVAVLAVHGAGNLVNT), 134 to 154 (FGVFLYTLGCVCAACLYYLSP), 160 to 180 (LALIYFGGLSGSFLYTGGIGF), 188 to 208 (LIILITFGPLAVMFAYAIQVG), 209 to 229 (SLAIFPLVYAIPLALSTEAIL), 245 to 267 (IVTLAILIGPTFSYILYNTLLFL), 277 to 297 (THCTISLALPLLTIPMAFSLE), and 315 to 335 (LNLLLGLFYVFGIILAPAGSL).

This sequence belongs to the UbiA prenyltransferase family. Interacts with HMGCR and SOAT1. In terms of tissue distribution, ubiquitously expressed.

It is found in the endoplasmic reticulum membrane. The protein localises to the golgi apparatus membrane. The protein resides in the mitochondrion membrane. It localises to the cytoplasm. Its subcellular location is the nucleus. The catalysed reaction is menadiol + (2E,6E,10E)-geranylgeranyl diphosphate = menaquinol-4 + diphosphate. The enzyme catalyses all-trans-decaprenyl diphosphate + 4-hydroxybenzoate = 4-hydroxy-3-(all-trans-decaprenyl)benzoate + diphosphate. It functions in the pathway quinol/quinone metabolism; menaquinone biosynthesis. Its pathway is cofactor biosynthesis; ubiquinone biosynthesis. Its function is as follows. Prenyltransferase that mediates the formation of menaquinone-4 (MK-4) and coenzyme Q10. MK-4 is a vitamin K2 isoform present at high concentrations in the brain, kidney and pancreas, and is required for endothelial cell development. Mediates the conversion of phylloquinone (PK) into MK-4, probably by cleaving the side chain of phylloquinone (PK) to release 2-methyl-1,4-naphthoquinone (menadione; K3) and then prenylating it with geranylgeranyl pyrophosphate (GGPP) to form MK-4. Also plays a role in cardiovascular development independently of MK-4 biosynthesis, by acting as a coenzyme Q10 biosynthetic enzyme: coenzyme Q10, also named ubiquinone, plays an important antioxidant role in the cardiovascular system. Mediates biosynthesis of coenzyme Q10 in the Golgi membrane, leading to protect cardiovascular tissues from NOS3/eNOS-dependent oxidative stress. This Homo sapiens (Human) protein is UbiA prenyltransferase domain-containing protein 1.